Here is a 306-residue protein sequence, read N- to C-terminus: Phosphoribosylaminoimidazole-succinocarboxamide synthase (306 aa).

Serine 2 is subject to N-acetylserine.

It belongs to the SAICAR synthetase family. In terms of assembly, monomer.

The enzyme catalyses 5-amino-1-(5-phospho-D-ribosyl)imidazole-4-carboxylate + L-aspartate + ATP = (2S)-2-[5-amino-1-(5-phospho-beta-D-ribosyl)imidazole-4-carboxamido]succinate + ADP + phosphate + 2 H(+). It functions in the pathway purine metabolism; IMP biosynthesis via de novo pathway; 5-amino-1-(5-phospho-D-ribosyl)imidazole-4-carboxamide from 5-amino-1-(5-phospho-D-ribosyl)imidazole-4-carboxylate: step 1/2. Catalyzes the reaction of 4-carboxy-5-aminoimidazole ribotide (CAIR) and aspartic acid with the formation of N-succinyl-5-amino-imidazole-4-carboxamide ribotide (SAICAR) in the purine biosynthesis pathway. This Saccharomyces cerevisiae (strain ATCC 204508 / S288c) (Baker's yeast) protein is Phosphoribosylaminoimidazole-succinocarboxamide synthase (ADE1).